We begin with the raw amino-acid sequence, 163 residues long: RxLR effector protein PITG_13625 (163 aa).

An N-terminal signal peptide occupies residues 1–23; the sequence is MKVSKAIVALAALCMALLAPAAG. Residues 37-52 carry the RxLR-dEER motif; the sequence is RHLRQESAELATTPEE.

The protein belongs to the RxLR effector family.

The protein resides in the secreted. Its subcellular location is the host cell membrane. Its function is as follows. Effector that enhances P.infestans colonization of Nicotiana benthamiana leaves. This chain is RxLR effector protein PITG_13625, found in Phytophthora infestans (strain T30-4) (Potato late blight agent).